A 548-amino-acid polypeptide reads, in one-letter code: Membrane protein insertase YidC (548 aa).

A helical transmembrane segment spans residues 6–26; that stretch reads NLLVIALLFVSFMIWQAWEQD. The disordered stretch occupies residues 28–55; that stretch reads NPQPQAQQTTQTTTTAAGSAADQGVPAS. The span at 30-50 shows a compositional bias: low complexity; it reads QPQAQQTTQTTTTAAGSAADQ. 4 helical membrane passes run 350–370, 420–440, 458–478, and 499–519; these read FVGN…GIMY, LGGC…YYML, LSAQ…MFFI, and PVIF…YYIV.

The protein belongs to the OXA1/ALB3/YidC family. Type 1 subfamily. As to quaternary structure, interacts with the Sec translocase complex via SecD. Specifically interacts with transmembrane segments of nascent integral membrane proteins during membrane integration.

Its subcellular location is the cell inner membrane. Its function is as follows. Required for the insertion and/or proper folding and/or complex formation of integral membrane proteins into the membrane. Involved in integration of membrane proteins that insert both dependently and independently of the Sec translocase complex, as well as at least some lipoproteins. Aids folding of multispanning membrane proteins. The polypeptide is Membrane protein insertase YidC (Shigella boydii serotype 18 (strain CDC 3083-94 / BS512)).